Here is a 313-residue protein sequence, read N- to C-terminus: Probable alpha-L-glutamate ligase (313 aa).

Residues 112 to 294 (LQMLMAQGIA…IALQMIVHLE (183 aa)) form the ATP-grasp domain. Residues K148, 185–186 (EF), D194, and 218–220 (RAN) each bind ATP. D255, E267, and N269 together coordinate Mg(2+). The Mn(2+) site is built by D255, E267, and N269.

This sequence belongs to the RimK family. Mg(2+) serves as cofactor. Mn(2+) is required as a cofactor.

The polypeptide is Probable alpha-L-glutamate ligase (Pasteurella multocida (strain Pm70)).